The sequence spans 547 residues: Chaperonin GroEL 1 (547 aa).

Residues 30-33 (TLGP), lysine 51, 87-91 (DGTTT), glycine 415, and aspartate 496 contribute to the ATP site.

This sequence belongs to the chaperonin (HSP60) family. As to quaternary structure, forms a cylinder of 14 subunits composed of two heptameric rings stacked back-to-back. Interacts with the co-chaperonin GroES.

It is found in the cytoplasm. It catalyses the reaction ATP + H2O + a folded polypeptide = ADP + phosphate + an unfolded polypeptide.. In terms of biological role, together with its co-chaperonin GroES, plays an essential role in assisting protein folding. The GroEL-GroES system forms a nano-cage that allows encapsulation of the non-native substrate proteins and provides a physical environment optimized to promote and accelerate protein folding. This is Chaperonin GroEL 1 from Rhodopseudomonas palustris (strain BisB5).